A 122-amino-acid polypeptide reads, in one-letter code: Small ribosomal subunit protein uS13 (122 aa).

The interval Arg-99–Lys-122 is disordered.

It belongs to the universal ribosomal protein uS13 family. In terms of assembly, part of the 30S ribosomal subunit. Forms a loose heterodimer with protein S19. Forms two bridges to the 50S subunit in the 70S ribosome.

Its function is as follows. Located at the top of the head of the 30S subunit, it contacts several helices of the 16S rRNA. In the 70S ribosome it contacts the 23S rRNA (bridge B1a) and protein L5 of the 50S subunit (bridge B1b), connecting the 2 subunits; these bridges are implicated in subunit movement. Contacts the tRNAs in the A and P-sites. In Allorhizobium ampelinum (strain ATCC BAA-846 / DSM 112012 / S4) (Agrobacterium vitis (strain S4)), this protein is Small ribosomal subunit protein uS13.